An 87-amino-acid polypeptide reads, in one-letter code: Exodeoxyribonuclease 7 small subunit (87 aa).

It belongs to the XseB family. Heterooligomer composed of large and small subunits.

Its subcellular location is the cytoplasm. It carries out the reaction Exonucleolytic cleavage in either 5'- to 3'- or 3'- to 5'-direction to yield nucleoside 5'-phosphates.. Functionally, bidirectionally degrades single-stranded DNA into large acid-insoluble oligonucleotides, which are then degraded further into small acid-soluble oligonucleotides. This Solidesulfovibrio magneticus (strain ATCC 700980 / DSM 13731 / RS-1) (Desulfovibrio magneticus) protein is Exodeoxyribonuclease 7 small subunit.